The primary structure comprises 401 residues: Chalcone synthase 5 (401 aa).

The active site involves Cys-168.

This sequence belongs to the thiolase-like superfamily. Chalcone/stilbene synthases family.

It catalyses the reaction (E)-4-coumaroyl-CoA + 3 malonyl-CoA + 3 H(+) = 2',4,4',6'-tetrahydroxychalcone + 3 CO2 + 4 CoA. The protein operates within secondary metabolite biosynthesis; flavonoid biosynthesis. In terms of biological role, the primary product of this enzyme is 4,2',4',6'-tetrahydroxychalcone (also termed naringenin-chalcone or chalcone) which can under specific conditions spontaneously isomerize into naringenin. This is Chalcone synthase 5 (CHS5) from Sorghum bicolor (Sorghum).